A 141-amino-acid chain; its full sequence is Large ribosomal subunit protein uL11 (141 aa).

It belongs to the universal ribosomal protein uL11 family. As to quaternary structure, part of the ribosomal stalk of the 50S ribosomal subunit. Interacts with L10 and the large rRNA to form the base of the stalk. L10 forms an elongated spine to which L12 dimers bind in a sequential fashion forming a multimeric L10(L12)X complex. In terms of processing, one or more lysine residues are methylated.

Forms part of the ribosomal stalk which helps the ribosome interact with GTP-bound translation factors. The sequence is that of Large ribosomal subunit protein uL11 from Levilactobacillus brevis (strain ATCC 367 / BCRC 12310 / CIP 105137 / JCM 1170 / LMG 11437 / NCIMB 947 / NCTC 947) (Lactobacillus brevis).